We begin with the raw amino-acid sequence, 558 residues long: DNA ligase B (558 aa).

Lysine 124 serves as the catalytic N6-AMP-lysine intermediate.

Belongs to the NAD-dependent DNA ligase family. LigB subfamily.

It catalyses the reaction NAD(+) + (deoxyribonucleotide)n-3'-hydroxyl + 5'-phospho-(deoxyribonucleotide)m = (deoxyribonucleotide)n+m + AMP + beta-nicotinamide D-nucleotide.. In terms of biological role, catalyzes the formation of phosphodiester linkages between 5'-phosphoryl and 3'-hydroxyl groups in double-stranded DNA using NAD as a coenzyme and as the energy source for the reaction. The protein is DNA ligase B of Klebsiella pneumoniae (strain 342).